The primary structure comprises 91 residues: Small ribosomal subunit protein uS19 (91 aa).

It belongs to the universal ribosomal protein uS19 family.

In terms of biological role, protein S19 forms a complex with S13 that binds strongly to the 16S ribosomal RNA. This Laribacter hongkongensis (strain HLHK9) protein is Small ribosomal subunit protein uS19.